The sequence spans 376 residues: Transcription initiation factor IIA subunit 1 (376 aa).

The residue at position 2 (Ala-2) is an N-acetylalanine. 2 stretches are compositionally biased toward low complexity: residues 69 to 79 (QVQQQHQPQQQ) and 89 to 105 (QAQP…TQQV). 3 disordered regions span residues 69–107 (QVQQ…QVLI), 247–266 (QAQI…AQTQ), and 274–329 (DGTG…QELF). Residues Ser-280, Ser-281, Ser-316, and Ser-321 each carry the phosphoserine; by TAF1 modification. Positions 280–329 (SSEEDEDEEEDYDDDEEEDKEKDGAEDGQVEEEPLNSEDDVSDEEGQELF) are enriched in acidic residues. 2 residues coordinate DNA: His-343 and Arg-344.

This sequence belongs to the TFIIA subunit 1 family. As to quaternary structure, TFIIA is a heterodimer of the large unprocessed subunit 1 and a small subunit gamma. It was originally believed to be a heterotrimer of an alpha (p35), a beta (p19) and a gamma subunit (p12). TFIIA forms a complex with TBP. Part of TBP-based Pol II pre-initiation complex (PIC), in which Pol II core assembles with general transcription factors and other specific initiation factors including GTF2E1, GTF2E2, GTF2F1, GTF2F2, TCEA1, ERCC2, ERCC3, GTF2H2, GTF2H3, GTF2H4, GTF2H5, GTF2A1, GTF2A2, GTF2B and TBP; this large multi-subunit PIC complex mediates DNA unwinding and targets Pol II core to the transcription start site where the first phosphodiester bond forms. Post-translationally, the alpha and beta subunits are postranslationally produced from the precursor form by TASP1. The cleavage promotes proteasomal degradation.

The protein localises to the nucleus. In terms of biological role, TFIIA is a component of the transcription machinery of RNA polymerase II and plays an important role in transcriptional activation. TFIIA in a complex with TBP mediates transcriptional activity. The sequence is that of Transcription initiation factor IIA subunit 1 (GTF2A1) from Homo sapiens (Human).